The following is a 247-amino-acid chain: Peptidyl-prolyl cis-trans isomerase FKBP17-2, chloroplastic (247 aa).

A chloroplast-targeting transit peptide spans 1 to 79; sequence MANLFTATAP…SSLTRRFGIG (79 aa). A disordered region spans residues 26–64; sequence QCYASSSNPPEPESSSPPPPPPPPQPLASQQKRKKNVET. Residues 34-51 are compositionally biased toward pro residues; it reads PPEPESSSPPPPPPPPQP. Positions 141–243 constitute a PPIase FKBP-type domain; it reads GDLVVIDLKG…EYIVEIDRVS (103 aa).

This sequence belongs to the FKBP-type PPIase family.

It localises to the plastid. Its subcellular location is the chloroplast thylakoid lumen. The enzyme catalyses [protein]-peptidylproline (omega=180) = [protein]-peptidylproline (omega=0). PPIases accelerate the folding of proteins. It catalyzes the cis-trans isomerization of proline imidic peptide bonds in oligopeptides. The polypeptide is Peptidyl-prolyl cis-trans isomerase FKBP17-2, chloroplastic (FKBP17-2) (Arabidopsis thaliana (Mouse-ear cress)).